Reading from the N-terminus, the 297-residue chain is HTH-type transcriptional regulator ArgP (297 aa).

The region spanning 4-60 (PDYRTLQALDAVIRERGFERAAQKLCITQSAVSQRIKQLENTFGQPLLVRTVPPRPT) is the HTH lysR-type domain. Residues 21 to 40 (FERAAQKLCITQSAVSQRIK) constitute a DNA-binding region (H-T-H motif).

The protein belongs to the LysR transcriptional regulatory family. As to quaternary structure, homodimer.

Functionally, controls the transcription of genes involved in arginine and lysine metabolism. The chain is HTH-type transcriptional regulator ArgP from Cronobacter sakazakii (strain ATCC BAA-894) (Enterobacter sakazakii).